Reading from the N-terminus, the 91-residue chain is Small ribosomal subunit protein uS19 (91 aa).

The protein belongs to the universal ribosomal protein uS19 family.

Its function is as follows. Protein S19 forms a complex with S13 that binds strongly to the 16S ribosomal RNA. In Prochlorococcus marinus subsp. pastoris (strain CCMP1986 / NIES-2087 / MED4), this protein is Small ribosomal subunit protein uS19.